A 482-amino-acid polypeptide reads, in one-letter code: Major cardiolipin synthase ClsA (482 aa).

The next 2 helical transmembrane spans lie at 3 to 23 (ISSI…IIVI) and 34 to 54 (WAWL…YLLF). 2 consecutive PLD phosphodiesterase domains span residues 217-244 (LNYR…GDEY) and 395-422 (DNGF…DVRS). Residues H222, K224, D229, H400, K402, and D407 contribute to the active site.

Belongs to the phospholipase D family. Cardiolipin synthase subfamily.

It is found in the cell membrane. The catalysed reaction is 2 a 1,2-diacyl-sn-glycero-3-phospho-(1'-sn-glycerol) = a cardiolipin + glycerol. Its function is as follows. Catalyzes the reversible phosphatidyl group transfer from one phosphatidylglycerol molecule to another to form cardiolipin (CL) (diphosphatidylglycerol) and glycerol. The chain is Major cardiolipin synthase ClsA (clsA) from Bacillus subtilis (strain 168).